We begin with the raw amino-acid sequence, 360 residues long: DNA replication and repair protein RecF (360 aa).

ATP is bound at residue 33-40 (GENGSGKT).

This sequence belongs to the RecF family.

It is found in the cytoplasm. Functionally, the RecF protein is involved in DNA metabolism; it is required for DNA replication and normal SOS inducibility. RecF binds preferentially to single-stranded, linear DNA. It also seems to bind ATP. This Rickettsia africae (strain ESF-5) protein is DNA replication and repair protein RecF.